Consider the following 207-residue polypeptide: Protein YABBY 6 (207 aa).

The C4-type zinc finger occupies 16–43 (CNFCNTILAVSVPGNSMLNIVTVRCGHC).

The protein belongs to the YABBY family. In terms of tissue distribution, expressed in leaf blades, leaf sheaths and flowers.

The protein localises to the nucleus. This Oryza sativa subsp. japonica (Rice) protein is Protein YABBY 6 (YAB6).